Here is a 110-residue protein sequence, read N- to C-terminus: UPF0213 protein DVU_3309 (110 aa).

Residues 8 to 83 (EVWFVYLLRC…KRQPTDQKLA (76 aa)) form the GIY-YIG domain.

It belongs to the UPF0213 family.

The polypeptide is UPF0213 protein DVU_3309 (Nitratidesulfovibrio vulgaris (strain ATCC 29579 / DSM 644 / CCUG 34227 / NCIMB 8303 / VKM B-1760 / Hildenborough) (Desulfovibrio vulgaris)).